The sequence spans 68 residues: Protein SlyX homolog (68 aa).

The protein belongs to the SlyX family.

The protein is Protein SlyX homolog of Pseudomonas fluorescens (strain SBW25).